The chain runs to 382 residues: Porin-like protein BU359 (382 aa).

A signal peptide spans 1–23 (MTNRKSLAMVIPMLLAASNGVNA).

The protein belongs to the Gram-negative porin family. In terms of assembly, homotrimer.

Its subcellular location is the cell outer membrane. In terms of biological role, forms pores that allow passive diffusion of small molecules across the membrane. The sequence is that of Porin-like protein BU359 from Buchnera aphidicola subsp. Acyrthosiphon pisum (strain APS) (Acyrthosiphon pisum symbiotic bacterium).